Consider the following 429-residue polypeptide: Enolase (429 aa).

Q162 contacts (2R)-2-phosphoglycerate. The active-site Proton donor is the E204. Mg(2+)-binding residues include D241, E283, and D310. K335, R364, S365, and K386 together coordinate (2R)-2-phosphoglycerate. K335 (proton acceptor) is an active-site residue.

Belongs to the enolase family. It depends on Mg(2+) as a cofactor.

It is found in the cytoplasm. The protein localises to the secreted. It localises to the cell surface. The enzyme catalyses (2R)-2-phosphoglycerate = phosphoenolpyruvate + H2O. The protein operates within carbohydrate degradation; glycolysis; pyruvate from D-glyceraldehyde 3-phosphate: step 4/5. In terms of biological role, catalyzes the reversible conversion of 2-phosphoglycerate (2-PG) into phosphoenolpyruvate (PEP). It is essential for the degradation of carbohydrates via glycolysis. This chain is Enolase, found in Mycolicibacterium vanbaalenii (strain DSM 7251 / JCM 13017 / BCRC 16820 / KCTC 9966 / NRRL B-24157 / PYR-1) (Mycobacterium vanbaalenii).